The chain runs to 613 residues: Tetratricopeptide repeat protein 39A (613 aa).

3 TPR repeats span residues 315–348 (AIFLFFAGRIEVIKGNIDAAIRRFEECCEAQQHW), 505–538 (CLVKLLKGLCLKYLGRVQEAEENFRSISANEKKI), and 546–579 (PNALLELALLLMEQDRNEEAIKLLESAKQNYKNY).

The protein belongs to the TTC39 family.

The polypeptide is Tetratricopeptide repeat protein 39A (TTC39A) (Homo sapiens (Human)).